Reading from the N-terminus, the 612-residue chain is Threonine--tRNA ligase (612 aa).

The tract at residues 218–509 (DHRKLGVELG…LSEHFGGNFP (292 aa)) is catalytic. Residues Cys310, His361, and His486 each contribute to the Zn(2+) site.

The protein belongs to the class-II aminoacyl-tRNA synthetase family. As to quaternary structure, homodimer. Zn(2+) serves as cofactor.

It is found in the cytoplasm. It carries out the reaction tRNA(Thr) + L-threonine + ATP = L-threonyl-tRNA(Thr) + AMP + diphosphate + H(+). Its function is as follows. Catalyzes the attachment of threonine to tRNA(Thr) in a two-step reaction: L-threonine is first activated by ATP to form Thr-AMP and then transferred to the acceptor end of tRNA(Thr). Also edits incorrectly charged L-seryl-tRNA(Thr). The protein is Threonine--tRNA ligase of Helicobacter pylori (strain J99 / ATCC 700824) (Campylobacter pylori J99).